Consider the following 369-residue polypeptide: 3-isopropylmalate dehydrogenase (369 aa).

The substrate site is built by arginine 98, arginine 108, arginine 136, and aspartate 227. The Mg(2+) site is built by aspartate 227, aspartate 251, and aspartate 255. 290-302 (GSAPDIAGKGIAN) is a binding site for NAD(+).

Belongs to the isocitrate and isopropylmalate dehydrogenases family. LeuB type 1 subfamily. As to quaternary structure, homodimer. Mg(2+) serves as cofactor. Mn(2+) is required as a cofactor.

The protein resides in the cytoplasm. The catalysed reaction is (2R,3S)-3-isopropylmalate + NAD(+) = 4-methyl-2-oxopentanoate + CO2 + NADH. It functions in the pathway amino-acid biosynthesis; L-leucine biosynthesis; L-leucine from 3-methyl-2-oxobutanoate: step 3/4. Catalyzes the oxidation of 3-carboxy-2-hydroxy-4-methylpentanoate (3-isopropylmalate) to 3-carboxy-4-methyl-2-oxopentanoate. The product decarboxylates to 4-methyl-2 oxopentanoate. In Gluconobacter oxydans (strain 621H) (Gluconobacter suboxydans), this protein is 3-isopropylmalate dehydrogenase.